Reading from the N-terminus, the 773-residue chain is Ion-translocating oxidoreductase complex subunit C (773 aa).

2 consecutive 4Fe-4S ferredoxin-type domains span residues 368–398 and 408–437; these read ELTS…QQLQ and KCEE…VQYY. 8 residues coordinate [4Fe-4S] cluster: cysteine 378, cysteine 381, cysteine 384, cysteine 388, cysteine 417, cysteine 420, cysteine 423, and cysteine 427. Basic and acidic residues predominate over residues 460 to 490; it reads RFEEKKARMERDKAERENRFKQAAEDRRKEM. 2 disordered regions span residues 460 to 496 and 533 to 773; these read RFEE…QGGS and AKQA…EEKD. Positions 533 to 545 are enriched in low complexity; it reads AKQAEAAQSGASE. Positions 550-572 are enriched in basic and acidic residues; that stretch reads EMAKLREERKRQARERKAQKGEV. Positions 605–618 are enriched in low complexity; sequence TESAAQPAQATPSS. Composition is skewed to polar residues over residues 643 to 657, 684 to 697, 724 to 737, and 761 to 773; these read GTES…TPSS, TEST…TPSS, TKST…TPSS, and QQSS…EEKD.

It belongs to the 4Fe4S bacterial-type ferredoxin family. RnfC subfamily. As to quaternary structure, the complex is composed of six subunits: RnfA, RnfB, RnfC, RnfD, RnfE and RnfG. Requires [4Fe-4S] cluster as cofactor.

The protein localises to the cell inner membrane. Its function is as follows. Part of a membrane-bound complex that couples electron transfer with translocation of ions across the membrane. This is Ion-translocating oxidoreductase complex subunit C from Vibrio cholerae serotype O1 (strain ATCC 39541 / Classical Ogawa 395 / O395).